Reading from the N-terminus, the 532-residue chain is Probable G-protein coupled receptor Mth-like 11 (532 aa).

A signal peptide spans 1 to 20 (MGMFRVEYLLLGILVIGVRS). Residues 21–229 (RDIPNCDFFD…VRKSRLSNAS (209 aa)) are Extracellular-facing. Cystine bridges form between Cys26-Cys80, Cys82-Cys87, Cys91-Cys184, Cys92-Cys103, and Cys145-Cys204. A glycan (N-linked (GlcNAc...) asparagine) is linked at Asn42. 5 N-linked (GlcNAc...) asparagine glycosylation sites follow: Asn110, Asn123, Asn166, Asn195, and Asn227. The chain crosses the membrane as a helical span at residues 230 to 250 (IPVKFSSVFFMVITIAAYLWL). At 251–262 (PKFRSLHGKCCN) the chain is on the cytoplasmic side. A helical transmembrane segment spans residues 263-283 (LYFICLAITFLLNVISLFGIF). Topologically, residues 284 to 290 (ELKTPIC) are extracellular. Residues 291-311 (YLTGYAGYFTVMATFLWLSVI) traverse the membrane as a helical segment. Over 312–339 (SFDVWRRFAMRKFQVFYKNKRSSFFNYN) the chain is Cytoplasmic. The chain crosses the membrane as a helical span at residues 340 to 360 (IIVWSSAGLLTCIIFLVDQFV). Residues 361–386 (ETNLDNPYNPAVGVFSCWIFTNGWSA) are Extracellular-facing. A helical membrane pass occupies residues 387–407 (TFYFYAPLAILIILNCASFFL). Residues 408 to 439 (TTRYIYVENKQNQKVLNNSEPQKLSRNHANYR) are Cytoplasmic-facing. A helical transmembrane segment spans residues 440–460 (IYFRLFIIMGGSWFLEIIAFI). Topologically, residues 461-469 (CEMENMWKP) are extracellular. The chain crosses the membrane as a helical span at residues 470–490 (LIILNDYINCSQGIIIFVATF). Residues 491–532 (CNHEMFRLIRKRIQNRNITSLELTNTSRPVESEKMADVELGK) are Cytoplasmic-facing.

This sequence belongs to the G-protein coupled receptor 2 family. Mth subfamily.

The protein resides in the cell membrane. This Drosophila melanogaster (Fruit fly) protein is Probable G-protein coupled receptor Mth-like 11 (mthl11).